The primary structure comprises 320 residues: GDP-L-fucose synthase (320 aa).

14-20 is an NADP(+) binding site; the sequence is GGSGLVG. Residue Tyr142 is the Proton donor/acceptor of the active site. NADP(+) contacts are provided by residues Lys146, 169–172, and His185; that span reads PTNI. Residues Lys193, Arg214, and Asp276 each coordinate substrate.

It belongs to the NAD(P)-dependent epimerase/dehydratase family. Fucose synthase subfamily.

The enzyme catalyses GDP-beta-L-fucose + NADP(+) = GDP-4-dehydro-alpha-D-rhamnose + NADPH + H(+). It functions in the pathway nucleotide-sugar biosynthesis; GDP-L-fucose biosynthesis via de novo pathway; GDP-L-fucose from GDP-alpha-D-mannose: step 2/2. In terms of biological role, catalyzes the two-step NADP-dependent conversion of GDP-4-dehydro-6-deoxy-D-mannose to GDP-fucose, involving an epimerase and a reductase reaction. In Dictyostelium discoideum (Social amoeba), this protein is GDP-L-fucose synthase (ger).